A 408-amino-acid chain; its full sequence is CCA-adding enzyme (408 aa).

Residues glycine 8 and arginine 11 each coordinate ATP. Residues glycine 8 and arginine 11 each coordinate CTP. Residues glutamate 21 and aspartate 23 each contribute to the Mg(2+) site. Residues arginine 91, arginine 137, and arginine 140 each coordinate ATP. CTP is bound by residues arginine 91, arginine 137, and arginine 140. In terms of domain architecture, HD spans 226–329 (TGYYTMTTLS…MTLFHVFDCW (104 aa)).

This sequence belongs to the tRNA nucleotidyltransferase/poly(A) polymerase family. Bacterial CCA-adding enzyme type 2 subfamily. Mg(2+) is required as a cofactor.

It catalyses the reaction a tRNA precursor + 2 CTP + ATP = a tRNA with a 3' CCA end + 3 diphosphate. It carries out the reaction a tRNA with a 3' CCA end + 2 CTP + ATP = a tRNA with a 3' CCACCA end + 3 diphosphate. In terms of biological role, catalyzes the addition and repair of the essential 3'-terminal CCA sequence in tRNAs without using a nucleic acid template. Adds these three nucleotides in the order of C, C, and A to the tRNA nucleotide-73, using CTP and ATP as substrates and producing inorganic pyrophosphate. tRNA 3'-terminal CCA addition is required both for tRNA processing and repair. Also involved in tRNA surveillance by mediating tandem CCA addition to generate a CCACCA at the 3' terminus of unstable tRNAs. While stable tRNAs receive only 3'-terminal CCA, unstable tRNAs are marked with CCACCA and rapidly degraded. This chain is CCA-adding enzyme, found in Blochmanniella pennsylvanica (strain BPEN).